The chain runs to 359 residues: tRNA-specific 2-thiouridylase MnmA (359 aa).

Residues Ala-6 to Ser-13 and Leu-32 each bind ATP. Cys-97 serves as the catalytic Nucleophile. Cys-97 and Cys-195 are joined by a disulfide. Gly-121 lines the ATP pocket. The interval Lys-144–Gln-146 is interaction with tRNA. Cys-195 serves as the catalytic Cysteine persulfide intermediate.

Belongs to the MnmA/TRMU family.

Its subcellular location is the cytoplasm. The catalysed reaction is S-sulfanyl-L-cysteinyl-[protein] + uridine(34) in tRNA + AH2 + ATP = 2-thiouridine(34) in tRNA + L-cysteinyl-[protein] + A + AMP + diphosphate + H(+). Catalyzes the 2-thiolation of uridine at the wobble position (U34) of tRNA, leading to the formation of s(2)U34. This chain is tRNA-specific 2-thiouridylase MnmA, found in Tropheryma whipplei (strain TW08/27) (Whipple's bacillus).